A 110-amino-acid chain; its full sequence is Integration host factor subunit alpha (110 aa).

This sequence belongs to the bacterial histone-like protein family. In terms of assembly, heterodimer of an alpha and a beta chain.

Its function is as follows. This protein is one of the two subunits of integration host factor, a specific DNA-binding protein that functions in genetic recombination as well as in transcriptional and translational control. This is Integration host factor subunit alpha from Nitrobacter hamburgensis (strain DSM 10229 / NCIMB 13809 / X14).